A 186-amino-acid chain; its full sequence is Peptidyl-tRNA hydrolase (186 aa).

TRNA is bound at residue Tyr14. The active-site Proton acceptor is His19. The tRNA site is built by Phe64, Asn66, and Asn112.

This sequence belongs to the PTH family. As to quaternary structure, monomer.

The protein localises to the cytoplasm. It carries out the reaction an N-acyl-L-alpha-aminoacyl-tRNA + H2O = an N-acyl-L-amino acid + a tRNA + H(+). Hydrolyzes ribosome-free peptidyl-tRNAs (with 1 or more amino acids incorporated), which drop off the ribosome during protein synthesis, or as a result of ribosome stalling. Its function is as follows. Catalyzes the release of premature peptidyl moieties from peptidyl-tRNA molecules trapped in stalled 50S ribosomal subunits, and thus maintains levels of free tRNAs and 50S ribosomes. This chain is Peptidyl-tRNA hydrolase, found in Anaplasma marginale (strain St. Maries).